Here is a 390-residue protein sequence, read N- to C-terminus: Protein PIN-LIKES 3 (390 aa).

Topologically, residues 1-14 (MVKLLELFITSSKP) are lumenal. A helical membrane pass occupies residues 15–35 (VVEILLITSVGFYMALDGVNL). Residues 36-43 (LGHDARKY) are Cytoplasmic-facing. The chain crosses the membrane as a helical span at residues 44–61 (LNNIVFYVFSPSLIGSRL). Residues 62 to 76 (ADSVTYESLVKMWFM) are Lumenal-facing. A helical membrane pass occupies residues 77–97 (PVNVLLTFIIGSLLGWIVIVI). The Cytoplasmic portion of the chain corresponds to 98–107 (TKPPSHLRGL). The helical transmembrane segment at 108-128 (ILGCCAAGNLGNMPLIIIPAV) threads the bilayer. Over 129–144 (CKEKGGPFGDPESCQK) the chain is Lumenal. Residues 145 to 165 (YGMGYVALSMAMGSIYIWTYV) traverse the membrane as a helical segment. The Cytoplasmic portion of the chain corresponds to 166-227 (YNLMRVLSNS…SLSQKVNLKT (62 aa)). The chain crosses the membrane as a helical span at residues 228 to 248 (IFAPSTIAAMIALVIGLITPL). Residues 249–265 (RKLIIGTEAPLRVLQDS) lie on the Lumenal side of the membrane. Residues 266 to 286 (VTLVGDGAVPAMTMIIGGNLL) form a helical membrane-spanning segment. Residues 287-297 (KGLRSSGMKMS) lie on the Cytoplasmic side of the membrane. Residues 298 to 318 (SIIGVLVARYVLLPMSGVLIV) traverse the membrane as a helical segment. Residues 319–331 (RGAYKLDLVTSEP) are Lumenal-facing. The chain crosses the membrane as a helical span at residues 332 to 352 (LYQFVLLLQYAVPPAMNLGTI). At 353 to 364 (TQLFGTGESECS) the chain is on the cytoplasmic side. The chain crosses the membrane as a helical span at residues 365 to 385 (VIMLWTYSLASIALTVWPTFF). At 386–390 (MWLVA) the chain is on the lumenal side.

The protein belongs to the auxin efflux carrier (TC 2.A.69.2) family. As to expression, expressed in seedlings, rosette and cauline leaves, flowers and siliques.

Its subcellular location is the endoplasmic reticulum membrane. Its function is as follows. Involved in cellular auxin homeostasis by regulating auxin metabolism. Regulates intracellular auxin accumulation at the endoplasmic reticulum and thus auxin availability for nuclear auxin signaling. The protein is Protein PIN-LIKES 3 (PILS3) of Arabidopsis thaliana (Mouse-ear cress).